The sequence spans 228 residues: Putative N-acetylmannosamine-6-phosphate 2-epimerase (228 aa).

Belongs to the NanE family.

The catalysed reaction is an N-acyl-D-glucosamine 6-phosphate = an N-acyl-D-mannosamine 6-phosphate. It functions in the pathway amino-sugar metabolism; N-acetylneuraminate degradation; D-fructose 6-phosphate from N-acetylneuraminate: step 3/5. In terms of biological role, converts N-acetylmannosamine-6-phosphate (ManNAc-6-P) to N-acetylglucosamine-6-phosphate (GlcNAc-6-P). The chain is Putative N-acetylmannosamine-6-phosphate 2-epimerase from Thermosynechococcus vestitus (strain NIES-2133 / IAM M-273 / BP-1).